Here is a 220-residue protein sequence, read N- to C-terminus: Iron-sulfur cluster repair protein YtfE (220 aa).

Belongs to the RIC family. YtfE subfamily. As to quaternary structure, homodimer.

It localises to the cytoplasm. Functionally, di-iron-containing protein involved in the repair of iron-sulfur clusters damaged by oxidative and nitrosative stress conditions. This is Iron-sulfur cluster repair protein YtfE from Shigella boydii serotype 4 (strain Sb227).